A 179-amino-acid polypeptide reads, in one-letter code: Isopentenyl-diphosphate Delta-isomerase (179 aa).

Mn(2+)-binding residues include H24 and H30. The 133-residue stretch at 28–160 (LLHRAFSIFI…PEKFTVWFLT (133 aa)) folds into the Nudix hydrolase domain. C65 is an active-site residue. Mn(2+) is bound at residue H67. Residue E85 participates in Mg(2+) binding. Residues E110 and E112 each coordinate Mn(2+). E112 is an active-site residue.

It belongs to the IPP isomerase type 1 family. As to quaternary structure, homodimer. Mg(2+) is required as a cofactor. It depends on Mn(2+) as a cofactor.

It localises to the cytoplasm. The enzyme catalyses isopentenyl diphosphate = dimethylallyl diphosphate. It participates in isoprenoid biosynthesis; dimethylallyl diphosphate biosynthesis; dimethylallyl diphosphate from isopentenyl diphosphate: step 1/1. Catalyzes the 1,3-allylic rearrangement of the homoallylic substrate isopentenyl (IPP) to its highly electrophilic allylic isomer, dimethylallyl diphosphate (DMAPP). This is Isopentenyl-diphosphate Delta-isomerase from Serratia proteamaculans (strain 568).